The chain runs to 722 residues: Bifunctional UDP-N-acetylglucosamine 2-epimerase/N-acetylmannosamine kinase (722 aa).

Residues Arg-19, Ser-23, Arg-113, His-220, and Asn-253 each coordinate UDP. CMP-N-acetyl-beta-neuraminate is bound by residues Lys-259, Glu-271, Lys-280, and His-281. UDP contacts are provided by Val-282, Ser-301, Ser-302, Glu-307, and Arg-321. Positions 406–722 (TLSALAVDLG…VLDYTTRRIH (317 aa)) are N-acetylmannosamine kinase. Asp-413 contacts Mg(2+). Gly-416 contributes to the an N-acyl-D-mannosamine 6-phosphate binding site. Residues Thr-417, Asn-418, and Arg-420 each contribute to the ADP site. 6 residues coordinate an N-acyl-D-mannosamine 6-phosphate: Gly-476, Arg-477, Thr-489, Asn-516, Asp-517, and Gly-545. Positions 476, 477, 489, 516, and 517 each coordinate an N-acyl-D-mannosamine. Asp-517 is a catalytic residue. Positions 566 and 569 each coordinate an N-acyl-D-mannosamine. His-569 lines the an N-acyl-D-mannosamine 6-phosphate pocket. 4 residues coordinate Zn(2+): His-569, Cys-579, Cys-581, and Cys-586. Residue Glu-588 coordinates an N-acyl-D-mannosamine 6-phosphate. Glu-588 lines the an N-acyl-D-mannosamine pocket.

This sequence in the N-terminal section; belongs to the UDP-N-acetylglucosamine 2-epimerase family. It in the C-terminal section; belongs to the ROK (NagC/XylR) family. In terms of assembly, homodimer. Homotetramer. Homohexamer. The hexameric form exhibits both enzyme activities, whereas the dimeric form only catalyzes the phosphorylation of N-acyl-D-mannosamine. In terms of processing, phosphorylated. Phosphorylation by PKC activates the UDP-N-acetylglucosamine 2-epimerase activity.

The protein localises to the cytoplasm. It is found in the cytosol. It catalyses the reaction UDP-N-acetyl-alpha-D-glucosamine + H2O = aldehydo-N-acetyl-D-mannosamine + UDP + H(+). It carries out the reaction an N-acyl-D-mannosamine + ATP = an N-acyl-D-mannosamine 6-phosphate + ADP + H(+). It functions in the pathway amino-sugar metabolism; N-acetylneuraminate biosynthesis. Its activity is regulated as follows. The UDP-N-acetylglucosamine 2-epimerase activity, in contrast to the N-acetylmannosamine kinase activity, exhibits allosteric regulation by cytidine monophosphate-N-acetylneuraminic acid (CMP-Neu5Ac), the end product of neuraminic acid biosynthesis. Moreover, the activity is contingent upon the oligomeric state of the enzyme. The monomeric form is inactive, while the dimeric form selectively catalyzes the phosphorylation of N-acetylmannosamine. The hexameric form, on the other hand, demonstrates full proficiency in both enzyme activities. Furthermore, the UDP-N-acetylglucosamine 2-epimerase activity is increased by PKC-mediated phosphorylation. Its function is as follows. Bifunctional enzyme that possesses both UDP-N-acetylglucosamine 2-epimerase and N-acetylmannosamine kinase activities, and serves as the initiator of the biosynthetic pathway leading to the production of N-acetylneuraminic acid (NeuAc), a critical precursor in the synthesis of sialic acids. By catalyzing this pivotal and rate-limiting step in sialic acid biosynthesis, this enzyme assumes a pivotal role in governing the regulation of cell surface sialylation, playing a role in embryonic angiogenesis. Sialic acids represent a category of negatively charged sugars that reside on the surface of cells as terminal components of glycoconjugates and mediate important functions in various cellular processes, including cell adhesion, signal transduction, and cellular recognition. This chain is Bifunctional UDP-N-acetylglucosamine 2-epimerase/N-acetylmannosamine kinase (GNE), found in Cricetulus griseus (Chinese hamster).